The primary structure comprises 311 residues: Porphobilinogen deaminase (311 aa).

Residue Cys245 is modified to S-(dipyrrolylmethanemethyl)cysteine.

The protein belongs to the HMBS family. Monomer. The cofactor is dipyrromethane.

The enzyme catalyses 4 porphobilinogen + H2O = hydroxymethylbilane + 4 NH4(+). It participates in porphyrin-containing compound metabolism; protoporphyrin-IX biosynthesis; coproporphyrinogen-III from 5-aminolevulinate: step 2/4. Its function is as follows. Tetrapolymerization of the monopyrrole PBG into the hydroxymethylbilane pre-uroporphyrinogen in several discrete steps. This chain is Porphobilinogen deaminase, found in Deinococcus deserti (strain DSM 17065 / CIP 109153 / LMG 22923 / VCD115).